We begin with the raw amino-acid sequence, 245 residues long: Large ribosomal subunit protein uL2 (245 aa).

Residues 198–245 (VSHPHGGGSHKRPGKPTTVARTAPPGQKVGHIAARKTGRAKRRAATKR) are disordered. The segment covering 230–245 (AARKTGRAKRRAATKR) has biased composition (basic residues).

It belongs to the universal ribosomal protein uL2 family. Part of the 50S ribosomal subunit. Forms a bridge to the 30S subunit in the 70S ribosome.

Functionally, one of the primary rRNA binding proteins. Required for association of the 30S and 50S subunits to form the 70S ribosome, for tRNA binding and peptide bond formation. It has been suggested to have peptidyltransferase activity; this is somewhat controversial. Makes several contacts with the 16S rRNA in the 70S ribosome. This is Large ribosomal subunit protein uL2 from Korarchaeum cryptofilum (strain OPF8).